Consider the following 146-residue polypeptide: Hemoglobin subunit delta (146 aa).

One can recognise a Globin domain in the interval histidine 2–histidine 146. Heme b contacts are provided by histidine 63 and histidine 92.

This sequence belongs to the globin family. Heterotetramer of two delta chains and two alpha chains. As to expression, red blood cells.

In Ateles fusciceps (Brown-headed spider monkey), this protein is Hemoglobin subunit delta (HBD).